The chain runs to 715 residues: Polyribonucleotide nucleotidyltransferase (715 aa).

Mg(2+)-binding residues include aspartate 493 and aspartate 499. The region spanning 560-619 (PRMITIKINPEKIRDVIGKGGSVIRALTEETGTTIDISDDGVVTIASTSSEGMAEAKKRI) is the KH domain. One can recognise an S1 motif domain in the interval 629-697 (GQVYEGTVLK…EKGRVRLSAK (69 aa)).

The protein belongs to the polyribonucleotide nucleotidyltransferase family. Mg(2+) is required as a cofactor.

It is found in the cytoplasm. The enzyme catalyses RNA(n+1) + phosphate = RNA(n) + a ribonucleoside 5'-diphosphate. Its function is as follows. Involved in mRNA degradation. Catalyzes the phosphorolysis of single-stranded polyribonucleotides processively in the 3'- to 5'-direction. This chain is Polyribonucleotide nucleotidyltransferase, found in Burkholderia vietnamiensis (strain G4 / LMG 22486) (Burkholderia cepacia (strain R1808)).